Here is a 132-residue protein sequence, read N- to C-terminus: Small ribosomal subunit protein uS9 (132 aa).

The protein belongs to the universal ribosomal protein uS9 family.

This is Small ribosomal subunit protein uS9 from Blochmanniella pennsylvanica (strain BPEN).